We begin with the raw amino-acid sequence, 58 residues long: UPF0391 membrane protein Sfri_4000 (58 aa).

2 helical membrane passes run 6-26 (LMFLVIAVIAGLFGFTGIAGA) and 27-47 (AAGIAKIIFFIFIVLLVISLV).

This sequence belongs to the UPF0391 family.

It localises to the cell membrane. This is UPF0391 membrane protein Sfri_4000 from Shewanella frigidimarina (strain NCIMB 400).